The following is a 581-amino-acid chain: 2-succinyl-5-enolpyruvyl-6-hydroxy-3-cyclohexene-1-carboxylate synthase (581 aa).

This sequence belongs to the TPP enzyme family. MenD subfamily. Homodimer. Requires Mg(2+) as cofactor. It depends on Mn(2+) as a cofactor. Thiamine diphosphate is required as a cofactor.

The enzyme catalyses isochorismate + 2-oxoglutarate + H(+) = 5-enolpyruvoyl-6-hydroxy-2-succinyl-cyclohex-3-ene-1-carboxylate + CO2. It functions in the pathway quinol/quinone metabolism; 1,4-dihydroxy-2-naphthoate biosynthesis; 1,4-dihydroxy-2-naphthoate from chorismate: step 2/7. The protein operates within quinol/quinone metabolism; menaquinone biosynthesis. In terms of biological role, catalyzes the thiamine diphosphate-dependent decarboxylation of 2-oxoglutarate and the subsequent addition of the resulting succinic semialdehyde-thiamine pyrophosphate anion to isochorismate to yield 2-succinyl-5-enolpyruvyl-6-hydroxy-3-cyclohexene-1-carboxylate (SEPHCHC). The chain is 2-succinyl-5-enolpyruvyl-6-hydroxy-3-cyclohexene-1-carboxylate synthase from Psychromonas ingrahamii (strain DSM 17664 / CCUG 51855 / 37).